Consider the following 322-residue polypeptide: 2-oxoglutarate-dependent dioxygenase caaD (322 aa).

The 108-residue stretch at 172–279 (TGNAAMFLKL…FAVPAFWHGD (108 aa)) folds into the Fe2OG dioxygenase domain. Positions 200, 202, and 259 each coordinate Fe cation. 2-oxoglutarate is bound at residue arginine 269.

It belongs to the iron/ascorbate-dependent oxidoreductase family. Requires Fe(2+) as cofactor.

It functions in the pathway secondary metabolite biosynthesis. Its function is as follows. 2-oxoglutarate-dependent dioxygenase; part of the gene cluster that produces the acyltetronic acid derivatives carlosic acid, agglomerin F and carlosic acid methyl ether. CaaD catalyzes the sequential oxidations of the terminal C-10 methyl group of the caaC product to form carboxylic acid which is necessary for the biosynthesis of agglomerin F. The protein is 2-oxoglutarate-dependent dioxygenase caaD of Aspergillus niger (strain ATCC MYA-4892 / CBS 513.88 / FGSC A1513).